A 306-amino-acid polypeptide reads, in one-letter code: Tryptophan 2,3-dioxygenase (306 aa).

The segment at 1–33 is disordered; the sequence is MQPPGDDAAPRCPFAGAHAPDAPHVPEAAGDDA. Substrate contacts are provided by residues 75 to 79, Y137, and R141; that span reads FIIQH. Position 264 (H264) interacts with heme. T278 serves as a coordination point for substrate.

This sequence belongs to the tryptophan 2,3-dioxygenase family. As to quaternary structure, homotetramer. Heme serves as cofactor.

It carries out the reaction L-tryptophan + O2 = N-formyl-L-kynurenine. The protein operates within amino-acid degradation; L-tryptophan degradation via kynurenine pathway; L-kynurenine from L-tryptophan: step 1/2. Its function is as follows. Heme-dependent dioxygenase that catalyzes the oxidative cleavage of the L-tryptophan (L-Trp) pyrrole ring and converts L-tryptophan to N-formyl-L-kynurenine. Catalyzes the oxidative cleavage of the indole moiety. This chain is Tryptophan 2,3-dioxygenase, found in Burkholderia pseudomallei (strain 1106a).